The sequence spans 78 residues: uncharacterized protein (78 aa).

Positions 58–78 (EANDPEKKIPSTAAKAISLSP) are disordered.

This is an uncharacterized protein from Vaccinia virus (strain Copenhagen) (VACV).